The sequence spans 293 residues: Histamine N-methyltransferase (293 aa).

E28 lines the substrate pocket. 5 residues coordinate S-adenosyl-L-methionine: G60, E89, Q94, S120, and I142. Position 283 (N283) interacts with substrate.

This sequence belongs to the class I-like SAM-binding methyltransferase superfamily. HNMT family. In terms of assembly, monomer.

Its subcellular location is the cytoplasm. The enzyme catalyses histamine + S-adenosyl-L-methionine = N(tau)-methylhistamine + S-adenosyl-L-homocysteine + H(+). Its function is as follows. Inactivates histamine by N-methylation. Plays an important role in degrading histamine and in regulating the airway response to histamine. In Xenopus tropicalis (Western clawed frog), this protein is Histamine N-methyltransferase (hnmt).